Reading from the N-terminus, the 278-residue chain is NADPH-dependent 7-cyano-7-deazaguanine reductase (278 aa).

87-89 is a substrate binding site; that stretch reads IES. 89–90 provides a ligand contact to NADPH; it reads SK. The active-site Thioimide intermediate is C185. D192 functions as the Proton donor in the catalytic mechanism. 224–225 contributes to the substrate binding site; it reads HE. An NADPH-binding site is contributed by 253–254; sequence RG. The disordered stretch occupies residues 255 to 278; that stretch reads GLDINPYRSTNPTFSVQNHRSFRQ. Positions 261-278 are enriched in polar residues; sequence YRSTNPTFSVQNHRSFRQ.

It belongs to the GTP cyclohydrolase I family. QueF type 2 subfamily. As to quaternary structure, homodimer.

Its subcellular location is the cytoplasm. The enzyme catalyses 7-aminomethyl-7-carbaguanine + 2 NADP(+) = 7-cyano-7-deazaguanine + 2 NADPH + 3 H(+). The protein operates within tRNA modification; tRNA-queuosine biosynthesis. Functionally, catalyzes the NADPH-dependent reduction of 7-cyano-7-deazaguanine (preQ0) to 7-aminomethyl-7-deazaguanine (preQ1). The chain is NADPH-dependent 7-cyano-7-deazaguanine reductase from Coxiella burnetii (strain CbuG_Q212) (Coxiella burnetii (strain Q212)).